The sequence spans 506 residues: Ribose import ATP-binding protein RbsA 2 (506 aa).

2 consecutive ABC transporter domains span residues 6–241 and 254–499; these read LSMT…VGRV and EKSN…SITI. Residue 38-45 coordinates ATP; sequence GENGAGKS.

It belongs to the ABC transporter superfamily. Ribose importer (TC 3.A.1.2.1) family. As to quaternary structure, the complex is composed of an ATP-binding protein (RbsA), two transmembrane proteins (RbsC) and a solute-binding protein (RbsB).

It localises to the cell inner membrane. The enzyme catalyses D-ribose(out) + ATP + H2O = D-ribose(in) + ADP + phosphate + H(+). Its function is as follows. Part of the ABC transporter complex RbsABC involved in ribose import. Responsible for energy coupling to the transport system. This Agrobacterium fabrum (strain C58 / ATCC 33970) (Agrobacterium tumefaciens (strain C58)) protein is Ribose import ATP-binding protein RbsA 2.